We begin with the raw amino-acid sequence, 546 residues long: Amidase FG08078 (546 aa).

Residues Lys-129 and Ser-204 each act as charge relay system in the active site. The active-site Acyl-ester intermediate is Ser-228.

Belongs to the amidase family.

It functions in the pathway mycotoxin biosynthesis. In terms of biological role, amidase; part of the gene cluster that mediates the biosynthesis of butenolide, a mycotoxin that shows antibiotic activity but does not seem to play a major role in the spread of head blight in wheat. Butenolide is derived from glutamic acid via a 4-acetamido-2-butenoic acid intermediate. The predicted function of the NADH:flavin oxidoreductase FG08077, the cytochrome P450 monooxygenase FG08079, the decarboxylase FG08083, and the putative acetyltransferase FG08082 are consistent with this pathway, however, the respective activities of the butelonide biosynthesis cluster enzymes have still to be experimentally determined. In Gibberella zeae (strain ATCC MYA-4620 / CBS 123657 / FGSC 9075 / NRRL 31084 / PH-1) (Wheat head blight fungus), this protein is Amidase FG08078.